Reading from the N-terminus, the 271-residue chain is Probable redox regulatory protein SCO3349 (271 aa).

Disordered stretches follow at residues 1-21 and 109-130; these read MPKT…KHIA and AEGT…TRPF. Residues 7–21 show a composition bias toward basic and acidic residues; that stretch reads AKDEKSAKKDKKHIA.

It belongs to the Rv0495c family.

Its function is as follows. Essential for maintaining intracellular redox homeostasis. The sequence is that of Probable redox regulatory protein SCO3349 from Streptomyces coelicolor (strain ATCC BAA-471 / A3(2) / M145).